The chain runs to 518 residues: 2-isopropylmalate synthase (518 aa).

In terms of domain architecture, Pyruvate carboxyltransferase spans 4–266 (INVFDTTLRD…DSSLNLHELK (263 aa)). Mn(2+)-binding residues include Asp13, His201, His203, and Asn237. The interval 391–518 (EFLSLQVHYG…GLKRQTAVGS (128 aa)) is regulatory domain.

The protein belongs to the alpha-IPM synthase/homocitrate synthase family. LeuA type 1 subfamily. As to quaternary structure, homodimer. It depends on Mn(2+) as a cofactor.

Its subcellular location is the cytoplasm. It carries out the reaction 3-methyl-2-oxobutanoate + acetyl-CoA + H2O = (2S)-2-isopropylmalate + CoA + H(+). Its pathway is amino-acid biosynthesis; L-leucine biosynthesis; L-leucine from 3-methyl-2-oxobutanoate: step 1/4. In terms of biological role, catalyzes the condensation of the acetyl group of acetyl-CoA with 3-methyl-2-oxobutanoate (2-ketoisovalerate) to form 3-carboxy-3-hydroxy-4-methylpentanoate (2-isopropylmalate). The protein is 2-isopropylmalate synthase of Bacillus velezensis (strain DSM 23117 / BGSC 10A6 / LMG 26770 / FZB42) (Bacillus amyloliquefaciens subsp. plantarum).